The chain runs to 183 residues: Large ribosomal subunit protein uL6 (183 aa).

Belongs to the universal ribosomal protein uL6 family. Part of the 50S ribosomal subunit.

Its function is as follows. This protein binds to the 23S rRNA, and is important in its secondary structure. It is located near the subunit interface in the base of the L7/L12 stalk, and near the tRNA binding site of the peptidyltransferase center. The sequence is that of Large ribosomal subunit protein uL6 from Chlamydia pneumoniae (Chlamydophila pneumoniae).